Here is a 235-residue protein sequence, read N- to C-terminus: Attacin-E (235 aa).

The N-terminal stretch at 1–19 (MFGKIVFLLLVALCAGVQS) is a signal peptide. A propeptide spanning residues 20–47 (RYLIVSEPVYYIEHYEEPELLASSRVRR) is cleaved from the precursor.

Belongs to the attacin/sarcotoxin-2 family. In terms of processing, attacin F appears to be derived by proteolytic digestion of attacin E.

The protein localises to the secreted. In terms of biological role, hemolymph antibacterial protein. This is Attacin-E from Hyalophora cecropia (Cecropia moth).